Reading from the N-terminus, the 186-residue chain is Large ribosomal subunit protein uL5 (186 aa).

Belongs to the universal ribosomal protein uL5 family. Part of the 50S ribosomal subunit; part of the 5S rRNA/L5/L18/L25 subcomplex. Contacts the 5S rRNA and the P site tRNA. Forms a bridge to the 30S subunit in the 70S ribosome.

In terms of biological role, this is one of the proteins that bind and probably mediate the attachment of the 5S RNA into the large ribosomal subunit, where it forms part of the central protuberance. In the 70S ribosome it contacts protein S13 of the 30S subunit (bridge B1b), connecting the 2 subunits; this bridge is implicated in subunit movement. Contacts the P site tRNA; the 5S rRNA and some of its associated proteins might help stabilize positioning of ribosome-bound tRNAs. This Cereibacter sphaeroides (strain ATCC 17023 / DSM 158 / JCM 6121 / CCUG 31486 / LMG 2827 / NBRC 12203 / NCIMB 8253 / ATH 2.4.1.) (Rhodobacter sphaeroides) protein is Large ribosomal subunit protein uL5.